The primary structure comprises 101 residues: Small ribosomal subunit protein uS14 (101 aa).

The protein belongs to the universal ribosomal protein uS14 family. In terms of assembly, part of the 30S ribosomal subunit. Contacts proteins S3 and S10.

Binds 16S rRNA, required for the assembly of 30S particles and may also be responsible for determining the conformation of the 16S rRNA at the A site. The sequence is that of Small ribosomal subunit protein uS14 from Escherichia coli O8 (strain IAI1).